The sequence spans 270 residues: Expansin-B10 (270 aa).

The signal sequence occupies residues 1-31 (MAVNVRTMWSSMRAQVAMVVALVFLVRGAWC). N-linked (GlcNAc...) asparagine glycosylation occurs at N41. An Expansin-like EG45 domain is found at 70 to 176 (GGGCGYKDVN…RRVKCKYDSK (107 aa)). Cystine bridges form between C73–C101, C104–C171, and C109–C115. In terms of domain architecture, Expansin-like CBD spans 188–269 (NYLALLVKYV…NWKANTAYTA (82 aa)).

The protein belongs to the expansin family. Expansin B subfamily. In terms of tissue distribution, expressed in pollen.

Its subcellular location is the secreted. It is found in the cell wall. The protein localises to the membrane. Its function is as follows. May aid fertilization by loosening the cell wall of the stigma and style, thereby facilitating penetration of the pollen tube. Acts selectively on grass cell walls, which are relatively poor in pectins and xyloglucans and rich in glucuronoarabinoxylans and (1-3),(1-4)-beta-D-glucans, when compared with cell walls of other angiosperms, including other monocots. In Zea mays (Maize), this protein is Expansin-B10 (EXPB10).